We begin with the raw amino-acid sequence, 185 residues long: Ribosome maturation factor RimM (185 aa).

One can recognise a PRC barrel domain in the interval 106–185 (TGDYYWKDLI…TIEVDWDPGF (80 aa)).

This sequence belongs to the RimM family. As to quaternary structure, binds ribosomal protein uS19.

The protein localises to the cytoplasm. An accessory protein needed during the final step in the assembly of 30S ribosomal subunit, possibly for assembly of the head region. Essential for efficient processing of 16S rRNA. May be needed both before and after RbfA during the maturation of 16S rRNA. It has affinity for free ribosomal 30S subunits but not for 70S ribosomes. This Photorhabdus laumondii subsp. laumondii (strain DSM 15139 / CIP 105565 / TT01) (Photorhabdus luminescens subsp. laumondii) protein is Ribosome maturation factor RimM.